A 146-amino-acid polypeptide reads, in one-letter code: Snaclec jerdonibitin subunit beta (146 aa).

A signal peptide spans 1-23 (MGRFIFVSFGLLVVFLSLSGTGA). Cystine bridges form between C25/C36, C53/C142, and C119/C134. The 112-residue stretch at 32–143 (YEGHCYRVFQ…CSKTYPFVCK (112 aa)) folds into the C-type lectin domain.

It belongs to the snaclec family. As to quaternary structure, heterodimer of subunits alpha and beta; disulfide-linked. As to expression, expressed by the venom gland.

The protein resides in the secreted. Its function is as follows. Snaclec that dose-dependently inhibits platelet aggregation induced by ristocetin or low-dose thrombin, but not by high-dose thrombin. Binds to GPIbalpha (GP1BA). In vivo, also dose-dependently induces thrombocytopenia of mice and platelet counts remains at very low level even after 18 hours intravenous injection. In Protobothrops jerdonii (Jerdon's pitviper), this protein is Snaclec jerdonibitin subunit beta.